The sequence spans 547 residues: Chaperonin GroEL 1 (547 aa).

ATP is bound by residues 29-32 (TLGP), 86-90 (DGTTT), G418, 482-484 (NAA), and D498.

It belongs to the chaperonin (HSP60) family. As to quaternary structure, forms a cylinder of 14 subunits composed of two heptameric rings stacked back-to-back. Interacts with the co-chaperonin GroES.

It localises to the cytoplasm. It catalyses the reaction ATP + H2O + a folded polypeptide = ADP + phosphate + an unfolded polypeptide.. Functionally, together with its co-chaperonin GroES, plays an essential role in assisting protein folding. The GroEL-GroES system forms a nano-cage that allows encapsulation of the non-native substrate proteins and provides a physical environment optimized to promote and accelerate protein folding. In Corynebacterium jeikeium (strain K411), this protein is Chaperonin GroEL 1.